A 475-amino-acid polypeptide reads, in one-letter code: Chromosomal replication initiator protein DnaA (475 aa).

A domain I, interacts with DnaA modulators region spans residues 1–71; that stretch reads MTNDTWNEVR…RQLSAHGAGA (71 aa). Residues 71–133 form a domain II region; that stretch reads ADRVKFTVSP…PAQPRELPGA (63 aa). The span at 107–127 shows a compositional bias: low complexity; the sequence is APAPVHHTAPAPAPVAAPAQP. The segment at 107–129 is disordered; sequence APAPVHHTAPAPAPVAAPAQPRE. The segment at 134–355 is domain III, AAA+ region; it reads KLNPNFTFAN…GALTRLFAFA (222 aa). Gly178, Gly180, Lys181, and Thr182 together coordinate ATP. Residues 356 to 475 form a domain IV, binds dsDNA region; sequence DLVRREVTVD…AELLRRTLEA (120 aa).

The protein belongs to the DnaA family. As to quaternary structure, oligomerizes as a right-handed, spiral filament on DNA at oriC.

It is found in the cytoplasm. Plays an essential role in the initiation and regulation of chromosomal replication. ATP-DnaA binds to the origin of replication (oriC) to initiate formation of the DNA replication initiation complex once per cell cycle. Binds the DnaA box (a 9 base pair repeat at the origin) and separates the double-stranded (ds)DNA. Forms a right-handed helical filament on oriC DNA; dsDNA binds to the exterior of the filament while single-stranded (ss)DNA is stabiized in the filament's interior. The ATP-DnaA-oriC complex binds and stabilizes one strand of the AT-rich DNA unwinding element (DUE), permitting loading of DNA polymerase. After initiation quickly degrades to an ADP-DnaA complex that is not apt for DNA replication. Binds acidic phospholipids. The polypeptide is Chromosomal replication initiator protein DnaA (Jannaschia sp. (strain CCS1)).